Here is a 137-residue protein sequence, read N- to C-terminus: Protein FrxA (137 aa).

The sequence is that of Protein FrxA (frxA) from Pyrococcus furiosus (strain ATCC 43587 / DSM 3638 / JCM 8422 / Vc1).